The following is a 328-amino-acid chain: tRNA N6-adenosine threonylcarbamoyltransferase (328 aa).

The Fe cation site is built by His111 and His115. Substrate contacts are provided by residues Leu133–Gly137, Asp166, Gly179, Asp183, and Asn270. Residue Asp296 participates in Fe cation binding.

Belongs to the KAE1 / TsaD family. The cofactor is Fe(2+).

The protein localises to the cytoplasm. The enzyme catalyses L-threonylcarbamoyladenylate + adenosine(37) in tRNA = N(6)-L-threonylcarbamoyladenosine(37) in tRNA + AMP + H(+). Required for the formation of a threonylcarbamoyl group on adenosine at position 37 (t(6)A37) in tRNAs that read codons beginning with adenine. Is involved in the transfer of the threonylcarbamoyl moiety of threonylcarbamoyl-AMP (TC-AMP) to the N6 group of A37, together with TsaE and TsaB. TsaD likely plays a direct catalytic role in this reaction. The protein is tRNA N6-adenosine threonylcarbamoyltransferase of Phytoplasma australiense.